Reading from the N-terminus, the 714-residue chain is DNA ligase (714 aa).

Residues Asp47–Asp51, Ser96–Leu97, and Glu130 each bind NAD(+). Lys132 acts as the N6-AMP-lysine intermediate in catalysis. NAD(+) is bound by residues Arg153, Glu190, Lys306, and Lys330. Residues Cys435, Cys438, Cys453, and Cys459 each coordinate Zn(2+). Residues Arg636 to Gly714 form the BRCT domain.

Belongs to the NAD-dependent DNA ligase family. LigA subfamily. The cofactor is Mg(2+). Mn(2+) is required as a cofactor.

It catalyses the reaction NAD(+) + (deoxyribonucleotide)n-3'-hydroxyl + 5'-phospho-(deoxyribonucleotide)m = (deoxyribonucleotide)n+m + AMP + beta-nicotinamide D-nucleotide.. Functionally, DNA ligase that catalyzes the formation of phosphodiester linkages between 5'-phosphoryl and 3'-hydroxyl groups in double-stranded DNA using NAD as a coenzyme and as the energy source for the reaction. It is essential for DNA replication and repair of damaged DNA. The polypeptide is DNA ligase (Nitrobacter hamburgensis (strain DSM 10229 / NCIMB 13809 / X14)).